The sequence spans 374 residues: UDP-N-acetylglucosamine--N-acetylmuramyl-(pentapeptide) pyrophosphoryl-undecaprenol N-acetylglucosamine transferase (374 aa).

UDP-N-acetyl-alpha-D-glucosamine is bound by residues 13 to 15, N124, R165, S193, and Q294; that span reads TGG.

The protein belongs to the glycosyltransferase 28 family. MurG subfamily.

The protein localises to the cell inner membrane. The catalysed reaction is di-trans,octa-cis-undecaprenyl diphospho-N-acetyl-alpha-D-muramoyl-L-alanyl-D-glutamyl-meso-2,6-diaminopimeloyl-D-alanyl-D-alanine + UDP-N-acetyl-alpha-D-glucosamine = di-trans,octa-cis-undecaprenyl diphospho-[N-acetyl-alpha-D-glucosaminyl-(1-&gt;4)]-N-acetyl-alpha-D-muramoyl-L-alanyl-D-glutamyl-meso-2,6-diaminopimeloyl-D-alanyl-D-alanine + UDP + H(+). The protein operates within cell wall biogenesis; peptidoglycan biosynthesis. Cell wall formation. Catalyzes the transfer of a GlcNAc subunit on undecaprenyl-pyrophosphoryl-MurNAc-pentapeptide (lipid intermediate I) to form undecaprenyl-pyrophosphoryl-MurNAc-(pentapeptide)GlcNAc (lipid intermediate II). The sequence is that of UDP-N-acetylglucosamine--N-acetylmuramyl-(pentapeptide) pyrophosphoryl-undecaprenol N-acetylglucosamine transferase from Rhizobium johnstonii (strain DSM 114642 / LMG 32736 / 3841) (Rhizobium leguminosarum bv. viciae).